Here is a 698-residue protein sequence, read N- to C-terminus: UvrABC system protein B (698 aa).

The Helicase ATP-binding domain maps to 28 to 414; it reads RRILAGERDV…SGGEFVEQVI (387 aa). An ATP-binding site is contributed by 41-48; the sequence is GATGTGKS. Positions 94–117 match the Beta-hairpin motif; the sequence is YYDYYQPEAYIAQTDTYIEKDSSI. Positions 432–598 constitute a Helicase C-terminal domain; it reads QIDDLIGEIR…PLRKKIADIL (167 aa). Residues 609-629 are disordered; that stretch reads DTVQVGGSGRNVSRGRRAQSE. Residues 653-688 form the UVR domain; the sequence is ADLIKDLTAQMMAAASDLQFELAARFRDEIADLKKE.

It belongs to the UvrB family. In terms of assembly, forms a heterotetramer with UvrA during the search for lesions. Interacts with UvrC in an incision complex.

The protein localises to the cytoplasm. The UvrABC repair system catalyzes the recognition and processing of DNA lesions. A damage recognition complex composed of 2 UvrA and 2 UvrB subunits scans DNA for abnormalities. Upon binding of the UvrA(2)B(2) complex to a putative damaged site, the DNA wraps around one UvrB monomer. DNA wrap is dependent on ATP binding by UvrB and probably causes local melting of the DNA helix, facilitating insertion of UvrB beta-hairpin between the DNA strands. Then UvrB probes one DNA strand for the presence of a lesion. If a lesion is found the UvrA subunits dissociate and the UvrB-DNA preincision complex is formed. This complex is subsequently bound by UvrC and the second UvrB is released. If no lesion is found, the DNA wraps around the other UvrB subunit that will check the other stand for damage. The chain is UvrABC system protein B from Mycobacterium leprae (strain TN).